The primary structure comprises 509 residues: Steroid 17-alpha-hydroxylase/17,20 lyase (509 aa).

Position 202 (asparagine 202) interacts with substrate. A heme-binding site is contributed by cysteine 442.

This sequence belongs to the cytochrome P450 family. Requires heme as cofactor.

The protein localises to the endoplasmic reticulum membrane. The protein resides in the microsome membrane. The enzyme catalyses a C21-steroid + reduced [NADPH--hemoprotein reductase] + O2 = a 17alpha-hydroxy-C21-steroid + oxidized [NADPH--hemoprotein reductase] + H2O + H(+). It catalyses the reaction progesterone + reduced [NADPH--hemoprotein reductase] + O2 = 17alpha-hydroxyprogesterone + oxidized [NADPH--hemoprotein reductase] + H2O + H(+). It carries out the reaction pregnenolone + reduced [NADPH--hemoprotein reductase] + O2 = 17alpha-hydroxypregnenolone + oxidized [NADPH--hemoprotein reductase] + H2O + H(+). The catalysed reaction is 17alpha-hydroxyprogesterone + reduced [NADPH--hemoprotein reductase] + O2 = androst-4-ene-3,17-dione + acetate + oxidized [NADPH--hemoprotein reductase] + H2O + 2 H(+). The enzyme catalyses 17alpha-hydroxyprogesterone + reduced [NADPH--hemoprotein reductase] + O2 = 16alpha,17alpha-dihydroxyprogesterone + oxidized [NADPH--hemoprotein reductase] + H2O + H(+). It catalyses the reaction 16alpha,17alpha-dihydroxyprogesterone + reduced [NADPH--hemoprotein reductase] + O2 = 6beta,16alpha,17alpha-trihydroxyprogesterone + oxidized [NADPH--hemoprotein reductase] + H2O + H(+). It carries out the reaction 17alpha-hydroxypregnenolone + reduced [NADPH--hemoprotein reductase] + O2 = 3beta-hydroxyandrost-5-en-17-one + acetate + oxidized [NADPH--hemoprotein reductase] + H2O + 2 H(+). The catalysed reaction is 16alpha,17alpha-dihydroxypregnenolone + reduced [NADPH--hemoprotein reductase] + O2 = 3beta,16alpha-dihydroxy-androst-5-en-17-one + acetate + oxidized [NADPH--hemoprotein reductase] + H2O + 2 H(+). The enzyme catalyses 3beta-hydroxyandrost-5-en-17-one + reduced [NADPH--hemoprotein reductase] + O2 = 3beta,16alpha-dihydroxy-androst-5-en-17-one + oxidized [NADPH--hemoprotein reductase] + H2O + H(+). It catalyses the reaction androst-4-ene-3,17-dione + reduced [NADPH--hemoprotein reductase] + O2 = 16alpha-hydroxyandrost-4-ene-3,17-dione + oxidized [NADPH--hemoprotein reductase] + H2O + H(+). It functions in the pathway steroid hormone biosynthesis. It participates in steroid biosynthesis; glucocorticoid biosynthesis. With respect to regulation, regulated predominantly by intracellular cAMP levels. The 17,20-lyase activity is stimulated by cytochrome b5, which acts as an allosteric effector increasing the Vmax of the lyase activity. A cytochrome P450 monooxygenase involved in corticoid and androgen biosynthesis. Catalyzes 17-alpha hydroxylation of C21 steroids, which is common for both pathways. A second oxidative step, required only for androgen synthesis, involves an acyl-carbon cleavage. The 17-alpha hydroxy intermediates, as part of adrenal glucocorticoids biosynthesis pathway, are precursors of cortisol. Hydroxylates steroid hormones, pregnenolone and progesterone to form 17-alpha hydroxy metabolites, followed by the cleavage of the C17-C20 bond to form C19 steroids, dehydroepiandrosterone (DHEA) and androstenedione. Has 16-alpha hydroxylase activity. Catalyzes 16-alpha hydroxylation of 17-alpha hydroxy pregnenolone, followed by the cleavage of the C17-C20 bond to form 16-alpha-hydroxy DHEA. Also 16-alpha hydroxylates androgens, relevant for estriol synthesis. Mechanistically, uses molecular oxygen inserting one oxygen atom into a substrate, and reducing the second into a water molecule, with two electrons provided by NADPH via cytochrome P450 reductase (CPR; NADPH-ferrihemoprotein reductase). The protein is Steroid 17-alpha-hydroxylase/17,20 lyase (CYP17A1) of Bison bison (American bison).